The primary structure comprises 461 residues: Argininosuccinate lyase (461 aa).

It belongs to the lyase 1 family. Argininosuccinate lyase subfamily.

The protein localises to the cytoplasm. The catalysed reaction is 2-(N(omega)-L-arginino)succinate = fumarate + L-arginine. Its pathway is amino-acid biosynthesis; L-arginine biosynthesis; L-arginine from L-ornithine and carbamoyl phosphate: step 3/3. This is Argininosuccinate lyase from Trichormus variabilis (strain ATCC 29413 / PCC 7937) (Anabaena variabilis).